Consider the following 192-residue polypeptide: UPF0149 protein YgfB (192 aa).

It belongs to the UPF0149 family.

In Salmonella typhi, this protein is UPF0149 protein YgfB.